The following is a 45-amino-acid chain: Photosystem I reaction center subunit IX 1 (45 aa).

The chain crosses the membrane as a helical span at residues tryptophan 9–valine 29.

This sequence belongs to the PsaJ family.

It is found in the cellular thylakoid membrane. Functionally, may help in the organization of the PsaE and PsaF subunits. The chain is Photosystem I reaction center subunit IX 1 from Prochlorococcus marinus (strain NATL1A).